The chain runs to 253 residues: Histone H1.4 (253 aa).

A compositionally biased stretch (low complexity) spans 1-33; the sequence is MSDVAVAADTTETPAAPTKASKATKASKATKAS. Positions 1–43 are disordered; sequence MSDVAVAADTTETPAAPTKASKATKASKATKASKATKAKTTKV. Ser2 is modified (N-acetylserine). The 77-residue stretch at 51–127 folds into the H15 domain; the sequence is AHPPFINMVT…GANGRFRLAE (77 aa). The interval 134-253 is disordered; the sequence is KSPAAAKKDA…KKAPAAAPEA (120 aa). Basic and acidic residues-rich tracts occupy residues 139–149 and 188–200; these read AKKDATGEKKA and AAGD…EVKV. 2 stretches are compositionally biased toward basic residues: residues 201 to 210 and 234 to 244; these read KKVKSPKKIA and APKKAAAKPAK.

Belongs to the histone H1/H5 family.

It is found in the nucleus. Its subcellular location is the chromosome. Histones H1 are necessary for the condensation of nucleosome chains into higher-order structures. This is Histone H1.4 (hil-4) from Caenorhabditis elegans.